Consider the following 748-residue polypeptide: Translation factor GUF1 homolog 2, mitochondrial (748 aa).

Residues 1 to 29 (MRVGCCLLLKPLRQRLCTASISSRHIMRW) constitute a mitochondrion transit peptide. In terms of domain architecture, tr-type G spans 94–276 (SHIRNVAVVA…AIIERVPPPT (183 aa)). GTP-binding positions include 103-110 (AHVDHGKT), 167-171 (DTPGH), and 221-224 (TKMD).

This sequence belongs to the TRAFAC class translation factor GTPase superfamily. Classic translation factor GTPase family. LepA subfamily.

It is found in the mitochondrion inner membrane. The enzyme catalyses GTP + H2O = GDP + phosphate + H(+). Functionally, promotes mitochondrial protein synthesis. May act as a fidelity factor of the translation reaction, by catalyzing a one-codon backward translocation of tRNAs on improperly translocated ribosomes. Binds to mitochondrial ribosomes in a GTP-dependent manner. The polypeptide is Translation factor GUF1 homolog 2, mitochondrial (Trypanosoma cruzi (strain CL Brener)).